The sequence spans 244 residues: Large ribosomal subunit protein uL3 (244 aa).

The interval 215-244 is disordered; that stretch reads KKPPRERRGFAGSSTVDPLKASKRAVAKKK. The span at 235-244 shows a compositional bias: basic residues; sequence ASKRAVAKKK.

Belongs to the universal ribosomal protein uL3 family. In terms of assembly, part of the 50S ribosomal subunit. Forms a cluster with proteins L14 and L19.

Its function is as follows. One of the primary rRNA binding proteins, it binds directly near the 3'-end of the 23S rRNA, where it nucleates assembly of the 50S subunit. The chain is Large ribosomal subunit protein uL3 from Koribacter versatilis (strain Ellin345).